A 156-amino-acid chain; its full sequence is Type IV major fimbrial protein FimA (156 aa).

A propeptide spans 1-7 (MKSLQKG) (leader sequence). At F8 the chain carries N-methylphenylalanine. Residues 8 to 28 (FTLIELMIVVAIIGILAAIAI) form a helical membrane-spanning segment. Intrachain disulfides connect C57–C67 and C141–C154.

Belongs to the N-Me-Phe pilin family. As to quaternary structure, the pili are polar flexible filaments of about 5.4 nanometers diameter and 2.5 micrometers average length; they consist of only a single polypeptide chain arranged in a helical configuration of five subunits per turn in the assembled pilus.

It localises to the fimbrium. The protein localises to the membrane. Its function is as follows. Major component of the type IV fimbriae that plays an essential role in twitching motility, natural transformation, and protease secretion. This Dichelobacter nodosus (Bacteroides nodosus) protein is Type IV major fimbrial protein FimA (fimA).